We begin with the raw amino-acid sequence, 249 residues long: Isoprenyl transferase (249 aa).

The active site involves Asp-25. Asp-25 contacts Mg(2+). Substrate is bound by residues 26 to 29, Trp-30, Arg-38, His-42, and 70 to 72; these read GNGR and STE. Asn-73 acts as the Proton acceptor in catalysis. Substrate is bound by residues Trp-74, Arg-76, Arg-197, and 203–205; that span reads RLS. Position 216 (Glu-216) interacts with Mg(2+).

Belongs to the UPP synthase family. Homodimer. Mg(2+) is required as a cofactor.

Functionally, catalyzes the condensation of isopentenyl diphosphate (IPP) with allylic pyrophosphates generating different type of terpenoids. The protein is Isoprenyl transferase of Streptococcus thermophilus (strain CNRZ 1066).